The chain runs to 309 residues: Wall-associated proteinase (309 aa).

Residues N190 and N295 are each glycosylated (N-linked (GlcNAc...) asparagine).

Its subcellular location is the secreted. The protein resides in the cell wall. It is found in the membrane. Its function is as follows. May participate in wall plasticization and/or intussusception or in cell wall turnover. The chain is Wall-associated proteinase from Coccidioides immitis (strain RS) (Valley fever fungus).